Reading from the N-terminus, the 727-residue chain is C-terminal-binding protein 1 (727 aa).

A THAP-type zinc finger spans residues Cys-5 to His-60. A disordered region spans residues Gly-64–Gln-158. Residues Thr-77 to Ser-94 are compositionally biased toward basic and acidic residues. NAD(+) contacts are provided by residues Tyr-251, Leu-331–Val-336, Asp-355, Cys-388–Thr-394, Thr-415–His-417, Asp-441, and His-467–Trp-470. A compositionally biased stretch (low complexity) spans Ala-587–Ser-613. Disordered regions lie at residues Ala-587 to Ala-629 and Ala-652 to Asn-681.

This sequence belongs to the D-isomer specific 2-hydroxyacid dehydrogenase family. As to quaternary structure, homodimer.

In terms of biological role, binds DNA and represses gene expression. Plays a role in regulation of life span, possibly by regulating transcription of genes important for lipid metabolism. This is C-terminal-binding protein 1 from Caenorhabditis elegans.